The following is a 130-amino-acid chain: Small ribosomal subunit protein uS9 (130 aa).

The segment at 111–130 is disordered; that stretch reads VERKKVGLRKARRRPQFSKR. The span at 116 to 130 shows a compositional bias: basic residues; it reads VGLRKARRRPQFSKR.

The protein belongs to the universal ribosomal protein uS9 family.

The chain is Small ribosomal subunit protein uS9 from Enterobacter sp. (strain 638).